Here is a 227-residue protein sequence, read N- to C-terminus: Small ribosomal subunit protein uS3 (227 aa).

One can recognise a KH type-2 domain in the interval 38–106 (LRKFIKDRFY…NVNINIQEIR (69 aa)).

The protein belongs to the universal ribosomal protein uS3 family. As to quaternary structure, part of the 30S ribosomal subunit. Forms a tight complex with proteins S10 and S14.

Functionally, binds the lower part of the 30S subunit head. Binds mRNA in the 70S ribosome, positioning it for translation. This chain is Small ribosomal subunit protein uS3, found in Syntrophomonas wolfei subsp. wolfei (strain DSM 2245B / Goettingen).